The sequence spans 457 residues: Cysteine--tRNA ligase (457 aa).

Cys30 provides a ligand contact to Zn(2+). A 'HIGH' region motif is present at residues 32–42 (PTVYAPAHIGN). Zn(2+) contacts are provided by Cys221, His246, and Glu250. The 'KMSKS' region signature appears at 278–282 (KMSKS). An ATP-binding site is contributed by Lys281.

The protein belongs to the class-I aminoacyl-tRNA synthetase family. In terms of assembly, monomer. It depends on Zn(2+) as a cofactor.

The protein localises to the cytoplasm. It catalyses the reaction tRNA(Cys) + L-cysteine + ATP = L-cysteinyl-tRNA(Cys) + AMP + diphosphate. This is Cysteine--tRNA ligase from Opitutus terrae (strain DSM 11246 / JCM 15787 / PB90-1).